Reading from the N-terminus, the 288-residue chain is Nucleotide-binding protein APP7_0339 (288 aa).

8 to 15 lines the ATP pocket; that stretch reads GRSGSGKS. 56–59 provides a ligand contact to GTP; it reads DIRN.

The protein belongs to the RapZ-like family.

In terms of biological role, displays ATPase and GTPase activities. In Actinobacillus pleuropneumoniae serotype 7 (strain AP76), this protein is Nucleotide-binding protein APP7_0339.